The sequence spans 58 residues: Large ribosomal subunit protein uL30 (58 aa).

Belongs to the universal ribosomal protein uL30 family. Part of the 50S ribosomal subunit.

The polypeptide is Large ribosomal subunit protein uL30 (Bacteroides fragilis (strain ATCC 25285 / DSM 2151 / CCUG 4856 / JCM 11019 / LMG 10263 / NCTC 9343 / Onslow / VPI 2553 / EN-2)).